The sequence spans 404 residues: Keratin, type I cuticular Ha3-II (404 aa).

The interval 1-56 (MPYNFCLPSLSCRTSCSSRPCVPPSCHGYTLPGACNIPANVSNCNWFCEGSFNGSE) is head. The 312-residue stretch at 56–367 (EKETMQFLND…SLLESEDCKL (312 aa)) folds into the IF rod domain. The segment at 57–91 (KETMQFLNDRLASYLEKVRQLERDNAELENLIRER) is coil 1A. The tract at residues 92–102 (SQQQEPLLCPS) is linker 1. The tract at residues 103–203 (YQSYFKTIEE…HEQEVNTLRC (101 aa)) is coil 1B. The linker 12 stretch occupies residues 204–219 (QLGDRLNVEVDAAPAV). The tract at residues 220-363 (DLNQVLNETR…NTYRSLLESE (144 aa)) is coil 2. Residues 364-404 (DCKLPSNPCATTNACEKPIGSCVTNPCGPRSRCGPCNTFGY) are tail.

It belongs to the intermediate filament family.

In Homo sapiens (Human), this protein is Keratin, type I cuticular Ha3-II (KRT33B).